Reading from the N-terminus, the 95-residue chain is Integration host factor subunit beta (95 aa).

Positions 56–76 are disordered; the sequence is RAPRTGRNPKTGSSVDLEGKY.

This sequence belongs to the bacterial histone-like protein family. Heterodimer of an alpha and a beta chain.

In terms of biological role, this protein is one of the two subunits of integration host factor, a specific DNA-binding protein that functions in genetic recombination as well as in transcriptional and translational control. The chain is Integration host factor subunit beta from Shewanella baltica (strain OS223).